Reading from the N-terminus, the 177-residue chain is Bifunctional protein PyrR (177 aa).

Residues 99–111 (VVLVDDVLFTGRT) carry the PRPP-binding motif.

Belongs to the purine/pyrimidine phosphoribosyltransferase family. PyrR subfamily.

It carries out the reaction UMP + diphosphate = 5-phospho-alpha-D-ribose 1-diphosphate + uracil. Regulates the transcription of the pyrimidine nucleotide (pyr) operon in response to exogenous pyrimidines. In terms of biological role, also displays a weak uracil phosphoribosyltransferase activity which is not physiologically significant. The polypeptide is Bifunctional protein PyrR (Geobacter sulfurreducens (strain ATCC 51573 / DSM 12127 / PCA)).